Reading from the N-terminus, the 527-residue chain is Bifunctional methyltransferase (527 aa).

The tract at residues methionine 1–proline 309 is hemK. The segment at methionine 1 to asparagine 311 is RF MTase. Residues glycine 149–glycine 153, aspartate 172, tryptophan 201, asparagine 216, glutamate 356, glutamate 381, asparagine 408, and aspartate 430 contribute to the S-adenosyl-L-methionine site. Asparagine 216–tyrosine 219 serves as a coordination point for substrate. The interval isoleucine 310–histidine 527 is tRNA (guanine-N(7)-)-methyltransferase. A tRNA MTase region spans residues arginine 314–histidine 527. The active site involves aspartate 430. Substrate is bound by residues lysine 434 and aspartate 466.

This sequence in the C-terminal section; belongs to the class I-like SAM-binding methyltransferase superfamily. TrmB family. The protein in the N-terminal section; belongs to the protein N5-glutamine methyltransferase family. PrmC subfamily.

It catalyses the reaction L-glutaminyl-[peptide chain release factor] + S-adenosyl-L-methionine = N(5)-methyl-L-glutaminyl-[peptide chain release factor] + S-adenosyl-L-homocysteine + H(+). The catalysed reaction is guanosine(46) in tRNA + S-adenosyl-L-methionine = N(7)-methylguanosine(46) in tRNA + S-adenosyl-L-homocysteine. Functionally, methylates the class 1 translation termination release factors RF1/PrfA and RF2/PrfB on the glutamine residue of the universally conserved GGQ motif. In terms of biological role, catalyzes the formation of N(7)-methylguanine at position 46 (m7G46) in tRNA. In Rickettsia felis (strain ATCC VR-1525 / URRWXCal2) (Rickettsia azadi), this protein is Bifunctional methyltransferase (prmC/trmB).